The sequence spans 404 residues: Argininosuccinate synthase (404 aa).

7 to 15 (AYSGGLDTS) contacts ATP. Tyr-85 and Ser-90 together coordinate L-citrulline. Residue Gly-115 coordinates ATP. Thr-117, Asn-121, and Asp-122 together coordinate L-aspartate. Residue Asn-121 coordinates L-citrulline. Residues Arg-125, Ser-178, Ser-187, Glu-264, and Tyr-276 each coordinate L-citrulline.

Belongs to the argininosuccinate synthase family. Type 1 subfamily. In terms of assembly, homotetramer.

Its subcellular location is the cytoplasm. It catalyses the reaction L-citrulline + L-aspartate + ATP = 2-(N(omega)-L-arginino)succinate + AMP + diphosphate + H(+). It participates in amino-acid biosynthesis; L-arginine biosynthesis; L-arginine from L-ornithine and carbamoyl phosphate: step 2/3. This chain is Argininosuccinate synthase, found in Rhodopirellula baltica (strain DSM 10527 / NCIMB 13988 / SH1).